The primary structure comprises 132 residues: ATP synthase epsilon chain (132 aa).

Belongs to the ATPase epsilon chain family. F-type ATPases have 2 components, CF(1) - the catalytic core - and CF(0) - the membrane proton channel. CF(1) has five subunits: alpha(3), beta(3), gamma(1), delta(1), epsilon(1). CF(0) has three main subunits: a, b and c.

The protein localises to the cell membrane. Functionally, produces ATP from ADP in the presence of a proton gradient across the membrane. This chain is ATP synthase epsilon chain, found in Desulforamulus reducens (strain ATCC BAA-1160 / DSM 100696 / MI-1) (Desulfotomaculum reducens).